A 95-amino-acid chain; its full sequence is Small ribosomal subunit protein bS6 (95 aa).

This sequence belongs to the bacterial ribosomal protein bS6 family.

Functionally, binds together with bS18 to 16S ribosomal RNA. The sequence is that of Small ribosomal subunit protein bS6 from Corynebacterium urealyticum (strain ATCC 43042 / DSM 7109).